A 367-amino-acid chain; its full sequence is Oleoyl-acyl carrier protein thioesterase 2, chloroplastic (367 aa).

The transit peptide at 1–48 (MLKLSCNVTDHIHNLFSNSRRIFVPVHRQTRPISCFQLKKEPLRAILS) directs the protein to the chloroplast. Catalysis depends on residues N263, H265, and C300.

This sequence belongs to the acyl-ACP thioesterase family.

It is found in the plastid. The protein localises to the chloroplast. It carries out the reaction (9Z)-octadecenoyl-[ACP] + H2O = (9Z)-octadecenoate + holo-[ACP] + H(+). Plays an essential role in chain termination during de novo fatty acid synthesis. Possesses high thioesterase activity for oleoyl-ACP versus other acyl-ACPs. The protein is Oleoyl-acyl carrier protein thioesterase 2, chloroplastic (FATA2) of Arabidopsis thaliana (Mouse-ear cress).